The primary structure comprises 339 residues: tRNA N6-adenosine threonylcarbamoyltransferase (339 aa).

Fe cation-binding residues include His-114 and His-118. Substrate is bound by residues Val-137 to Gly-141, Asp-170, Gly-183, Asp-187, and Asn-277. Fe cation is bound at residue Asp-305.

It belongs to the KAE1 / TsaD family. Fe(2+) is required as a cofactor.

Its subcellular location is the cytoplasm. The catalysed reaction is L-threonylcarbamoyladenylate + adenosine(37) in tRNA = N(6)-L-threonylcarbamoyladenosine(37) in tRNA + AMP + H(+). In terms of biological role, required for the formation of a threonylcarbamoyl group on adenosine at position 37 (t(6)A37) in tRNAs that read codons beginning with adenine. Is involved in the transfer of the threonylcarbamoyl moiety of threonylcarbamoyl-AMP (TC-AMP) to the N6 group of A37, together with TsaE and TsaB. TsaD likely plays a direct catalytic role in this reaction. The polypeptide is tRNA N6-adenosine threonylcarbamoyltransferase (Clostridium perfringens (strain ATCC 13124 / DSM 756 / JCM 1290 / NCIMB 6125 / NCTC 8237 / Type A)).